The chain runs to 44 residues: Large ribosomal subunit protein bL34 (44 aa).

It belongs to the bacterial ribosomal protein bL34 family.

The chain is Large ribosomal subunit protein bL34 from Ehrlichia ruminantium (strain Gardel).